Reading from the N-terminus, the 331-residue chain is Protein PER1 homolog (331 aa).

The signal sequence occupies residues 1 to 24 (MRVLRNFTIFFLFTALSLFRQISA). Residues 25–100 (SAGDLHPVYV…QYHGKWYFIR (76 aa)) lie on the Lumenal side of the membrane. A helical membrane pass occupies residues 101 to 121 (VFGIQELFSVFFSMLNFMIHY). The Cytoplasmic portion of the chain corresponds to 122 to 139 (NGYHIMRRCIPDEHPAKR). Residues 140-160 (LCLSWAIVGMNAWVWSSVFHI) traverse the membrane as a helical segment. The Lumenal segment spans residues 161 to 168 (RDTPITEK). Residues 169-189 (LDYFSAGAFVLFGSYCTLILM) traverse the membrane as a helical segment. Topologically, residues 190 to 199 (LRLDQLPGGK) are cytoplasmic. Residues 200-220 (LLCWIIGVIFIAAFIAHVSYL) traverse the membrane as a helical segment. Topologically, residues 221 to 232 (SFYSFDYGYNMK) are lumenal. Residues 233 to 250 (ANVAVGLVQNILWYYYSW) traverse the membrane as a helical segment. Topologically, residues 251 to 263 (SNRNSGLYWTRWP) are cytoplasmic. Residues 264-284 (AYIVTSLMLATSLELFDFSPI) traverse the membrane as a helical segment. Topologically, residues 285–289 (ANLID) are lumenal. A helical membrane pass occupies residues 290-310 (AHALWHLSTVPITHYLYGFVV). The Cytoplasmic portion of the chain corresponds to 311-331 (RKCSYDLTKGTFKIKAYDSSR).

This sequence belongs to the PGAP3/PER1 family.

The protein localises to the endoplasmic reticulum membrane. It is found in the vacuole membrane. Its function is as follows. Involved in the lipid remodeling steps of GPI-anchor maturation. Lipid remodeling steps consist in the generation of 2 saturated fatty chains at the sn-2 position of GPI-anchors proteins. Required for phospholipase A2 activity that removes an acyl-chain at the sn-2 position of GPI-anchors during the remodeling of GPI. Required for efficient transport of GPI-anchor proteins. This chain is Protein PER1 homolog, found in Schizosaccharomyces pombe (strain 972 / ATCC 24843) (Fission yeast).